A 426-amino-acid polypeptide reads, in one-letter code: Protein FAM181B (426 aa).

2 disordered regions span residues 106–157 (GLMG…AAAA) and 226–246 (NLPPSFFTEPSRAGGGGCGPS). The segment covering 128–141 (PLAAPSAPTVAAPA) has biased composition (low complexity).

The protein belongs to the FAM181 family.

The sequence is that of Protein FAM181B (FAM181B) from Homo sapiens (Human).